A 688-amino-acid polypeptide reads, in one-letter code: MFKKLFGQLQRIGKALMLPVAILPAAGILLAFGNAMHNEQLVEIAPWLKNDIIVMISSVMEAAGQVVFDNLPLLFAVGTALGLAGGDGVAALAALVGYLIMNATMGKVLHITIDDIFSYAKGAKELSQAAKEPAHALVLGIPTLQTGVFGGIIMGALAAWCYNKFYNITLPPFLGFFAGKRFVPIVTSVVAIATGVLLSFAWPPIQDGLNSLSNFLLNKNLTLTTFIFGIIERSLIPFGLHHIFYSPFWFEFGSYTNHAGELVRGDQRIWMAQLKDGVPFTAGAFTTGKYPFMMFGLPAAAFAIYKNARPERKKVVGGLMLSAGLTAFLTGITEPLEFSFLFVAPVLYGIHVLLAGTSFLVMHLLGVKIGMTFSGGFIDYILYGLLNWDRSHALLVIPVGIVYAIVYYFLFDFAIRKFKLKTPGREDEETEIRNSSVAKLPFDVLDAMGGKENIKHLDACITRLRVEVVDKSKVDVAGIKALGASGVLEVGNNMQAIFGPKSDQIKHDMAKIMSGEITKPSETTVTEEMSDEPVHVEALGTTDIYAPGVGQIIPLSEVPDQVFAGKMMGDGIGFIPEKGEIVAPFDGTVKTIFPTKHAIGLESESGVEVLIHIGIDTVKLNGEGFESLINVDEKVTQGQPLMKVNLAYLKAHAPSIVTPMIITNLENKELVIEDVQDADPGKLIMTVK.

The region spanning 3–427 (KKLFGQLQRI…FKLKTPGRED (425 aa)) is the PTS EIIC type-1 domain. A run of 10 helical transmembrane segments spans residues 12-32 (IGKA…LLAF), 81-101 (LGLA…YLIM), 137-157 (LVLG…MGAL), 182-202 (FVPI…SFAW), 223-243 (LTTF…LHHI), 284-304 (AFTT…AFAI), 315-335 (VVGG…ITEP), 340-360 (FLFV…TSFL), 364-384 (LLGV…ILYG), and 395-415 (LVIP…DFAI). A PTS EIIB type-1 domain is found at 438–519 (AKLPFDVLDA…AKIMSGEITK (82 aa)). The active-site Phosphocysteine intermediate; for EIIB activity is cysteine 460. A PTS EIIA type-1 domain is found at 560-664 (DQVFAGKMMG…SIVTPMIITN (105 aa)). The Tele-phosphohistidine intermediate; for EIIA activity role is filled by histidine 612.

It localises to the cell membrane. In terms of biological role, the phosphoenolpyruvate-dependent sugar phosphotransferase system (sugar PTS), a major carbohydrate active -transport system, catalyzes the phosphorylation of incoming sugar substrates concomitantly with their translocation across the cell membrane. This system is involved in alpha- and beta-glucoside transport. The polypeptide is PTS system glucoside-specific EIICBA component (glcB) (Staphylococcus aureus (strain JH1)).